Consider the following 248-residue polypeptide: DNA repair protein RecO (248 aa).

Belongs to the RecO family.

Its function is as follows. Involved in DNA repair and RecF pathway recombination. This chain is DNA repair protein RecO, found in Bacillus cytotoxicus (strain DSM 22905 / CIP 110041 / 391-98 / NVH 391-98).